Reading from the N-terminus, the 32-residue chain is Allergen Asp fl 1 (32 aa).

In Aspergillus flavus, this protein is Allergen Asp fl 1.